Here is a 250-residue protein sequence, read N- to C-terminus: ATP synthase subunit a (250 aa).

The next 6 helical transmembrane spans lie at 29–49 (ASLFMAASAAVAVGFLYFATS), 84–104 (FFPLVFSLFMFVLTANLLGMF), 114–134 (IIVTFALAILVIGTVLVYGFY), 143–163 (VFVPSGVPGILLPLVVSIEII), 193–213 (FVASLGALGAVGVGGAVLPLI), and 216–236 (VALTGLEFLVAFLQAYVFAVL).

This sequence belongs to the ATPase A chain family. F-type ATPases have 2 components, CF(1) - the catalytic core - and CF(0) - the membrane proton channel. CF(1) has five subunits: alpha(3), beta(3), gamma(1), delta(1), epsilon(1). CF(0) has three main subunits: a(1), b(2) and c(9-12). The alpha and beta chains form an alternating ring which encloses part of the gamma chain. CF(1) is attached to CF(0) by a central stalk formed by the gamma and epsilon chains, while a peripheral stalk is formed by the delta and b chains.

It localises to the cell inner membrane. In terms of biological role, key component of the proton channel; it plays a direct role in the translocation of protons across the membrane. This chain is ATP synthase subunit a, found in Rhizobium leguminosarum bv. trifolii (strain WSM2304).